Reading from the N-terminus, the 228-residue chain is Putative elongation factor Tu-like protein (228 aa).

One can recognise a tr-type G domain in the interval 6 to 212; that stretch reads KPHINVGTIG…LPIREKDNPF (207 aa). The tract at residues 15-22 is G1; that stretch reads GHVDHGKT. Residues 59-63 are G2; sequence GITIS. Residues 80-83 are G3; that stretch reads DCPG. The segment at 135–138 is G4; sequence NKCD. The tract at residues 173–175 is G5; sequence SAV.

The protein belongs to the TRAFAC class translation factor GTPase superfamily. Classic translation factor GTPase family. EF-Tu/EF-1A subfamily.

The chain is Putative elongation factor Tu-like protein from Ehrlichia ruminantium (strain Welgevonden).